Here is a 336-residue protein sequence, read N- to C-terminus: Probable ADP-ribosylation factor GTPase-activating protein AGD13 (336 aa).

Residues 15 to 137 enclose the Arf-GAP domain; sequence KRRIRDLLNQ…EFLKPSLRIT (123 aa). The segment at 30–53 adopts a C4-type zinc-finger fold; it reads CADCGASDPKWASANIGVFICLKC. Residues 162–280 enclose the C2 domain; sequence RTNSSSQTMF…AMAFGDPEMF (119 aa). Ca(2+) contacts are provided by aspartate 249, serine 252, and aspartate 255.

Requires Ca(2+) as cofactor.

Its function is as follows. GTPase-activating protein (GAP) for ADP ribosylation factor (ARF). This is Probable ADP-ribosylation factor GTPase-activating protein AGD13 (AGD13) from Arabidopsis thaliana (Mouse-ear cress).